The primary structure comprises 519 residues: GTPase Der (519 aa).

Acidic residues-rich tracts occupy residues 1–12 (MDVEGAFADEEE) and 30–54 (GYED…PDFG). A disordered region spans residues 1-54 (MDVEGAFADEEELAPHGGWASADFDPAEFGYEDSDDDFDAEDFDETEFSNPDFG). 2 consecutive EngA-type G domains span residues 81–244 (CTVA…PEEP) and 254–427 (RRVA…DNWD). Residues 87-94 (GRPNVGKS), 134-138 (DTGGW), 196-199 (NKFD), 260-267 (GKPNVGKS), 307-311 (DTAGL), and 372-375 (NKWD) each bind GTP. The KH-like domain occupies 428 to 510 (RRISTGQLNT…PVRIAVRVRE (83 aa)).

This sequence belongs to the TRAFAC class TrmE-Era-EngA-EngB-Septin-like GTPase superfamily. EngA (Der) GTPase family. In terms of assembly, associates with the 50S ribosomal subunit.

GTPase that plays an essential role in the late steps of ribosome biogenesis. The sequence is that of GTPase Der from Corynebacterium glutamicum (strain ATCC 13032 / DSM 20300 / JCM 1318 / BCRC 11384 / CCUG 27702 / LMG 3730 / NBRC 12168 / NCIMB 10025 / NRRL B-2784 / 534).